The following is a 94-amino-acid chain: Co-chaperonin GroES (94 aa).

It belongs to the GroES chaperonin family. In terms of assembly, heptamer of 7 subunits arranged in a ring. Interacts with the chaperonin GroEL.

It localises to the cytoplasm. Functionally, together with the chaperonin GroEL, plays an essential role in assisting protein folding. The GroEL-GroES system forms a nano-cage that allows encapsulation of the non-native substrate proteins and provides a physical environment optimized to promote and accelerate protein folding. GroES binds to the apical surface of the GroEL ring, thereby capping the opening of the GroEL channel. The protein is Co-chaperonin GroES of Pediococcus pentosaceus (strain ATCC 25745 / CCUG 21536 / LMG 10740 / 183-1w).